Consider the following 231-residue polypeptide: MNKWNYGVFFVNFYNKGQQEPSKTMNNALETLRIIDEDTSIYDVINIDDHYLVKKDSEDKKLASFITLGEKLYVLATSENTVDIAAKYALPLVFKWDDINEERLKLLSFYNASASKYNKNIDLVRHQLMLHVNVNEAETVAKEELKLYIENYVACTQPSNFNGSIDSIIQSNVTGSYKDCLSYVANLAGKFDNTVDFLLCFESMQDQNKKKSVMIDLNNQVIKFRQDNNLI.

It belongs to the bacterial luciferase oxidoreductase family. As to quaternary structure, homodimer. It depends on FMN as a cofactor.

This chain is Non-fluorescent flavoprotein (luxF), found in Photobacterium phosphoreum.